The following is a 237-amino-acid chain: MEIIHLSEIDSTNDYAKELAKEGKRNFIVLADKQNNGKGRWGRVWYSDEGGLYFSMVLDSKLYNPKVINLLVPICIIEVLKNYVDKELGLKFPNDIMVKVNDNYKKLGGILTELTDDYMIIGIGINVNNQIRNEIREIAISLKEITGKELDKVEILSNFLKTFESYLEKLKNKEIDDYEILKKYKKYSITIGKQVKILLSNNEIITGKVYDIDFDGIVLGTEKGIERIPSGICIHVR.

The region spanning 1–191 is the BPL/LPL catalytic domain; it reads MEIIHLSEID…KKYKKYSITI (191 aa).

It belongs to the biotin--protein ligase family.

The enzyme catalyses biotin + L-lysyl-[protein] + ATP = N(6)-biotinyl-L-lysyl-[protein] + AMP + diphosphate + H(+). In Methanocaldococcus jannaschii (strain ATCC 43067 / DSM 2661 / JAL-1 / JCM 10045 / NBRC 100440) (Methanococcus jannaschii), this protein is Putative biotin ligase.